A 202-amino-acid polypeptide reads, in one-letter code: Proteasome subunit beta 1 (202 aa).

Met-1 is a propeptide (removed in mature form; by autocatalysis). Catalysis depends on Thr-2, which acts as the Nucleophile.

This sequence belongs to the peptidase T1B family. In terms of assembly, the 20S proteasome core is composed of 14 alpha and 14 beta subunits that assemble into four stacked heptameric rings, resulting in a barrel-shaped structure. The two inner rings, each composed of seven catalytic beta subunits, are sandwiched by two outer rings, each composed of seven alpha subunits. The catalytic chamber with the active sites is on the inside of the barrel. Has a gated structure, the ends of the cylinder being occluded by the N-termini of the alpha-subunits. Is capped at one or both ends by the proteasome regulatory ATPase, PAN.

It localises to the cytoplasm. The catalysed reaction is Cleavage of peptide bonds with very broad specificity.. Its activity is regulated as follows. The formation of the proteasomal ATPase PAN-20S proteasome complex, via the docking of the C-termini of PAN into the intersubunit pockets in the alpha-rings, triggers opening of the gate for substrate entry. Interconversion between the open-gate and close-gate conformations leads to a dynamic regulation of the 20S proteasome proteolysis activity. Functionally, component of the proteasome core, a large protease complex with broad specificity involved in protein degradation. In Pyrobaculum aerophilum (strain ATCC 51768 / DSM 7523 / JCM 9630 / CIP 104966 / NBRC 100827 / IM2), this protein is Proteasome subunit beta 1.